The sequence spans 78 residues: Large ribosomal subunit protein bL28 (78 aa).

The protein belongs to the bacterial ribosomal protein bL28 family.

The sequence is that of Large ribosomal subunit protein bL28 from Histophilus somni (strain 129Pt) (Haemophilus somnus).